The primary structure comprises 141 residues: Hemoglobin subunit alpha-1/2 (141 aa).

The Globin domain occupies V1–R141. S3 bears the Phosphoserine mark. K7 and K11 each carry N6-succinyllysine. K16 carries the post-translational modification N6-acetyllysine; alternate. K16 carries the post-translational modification N6-succinyllysine; alternate. Phosphotyrosine is present on Y24. S35 is modified (phosphoserine). K40 bears the N6-succinyllysine mark. S49 is modified (phosphoserine). H58 provides a ligand contact to O2. H87 lines the heme b pocket. The residue at position 102 (S102) is a Phosphoserine. At T108 the chain carries Phosphothreonine. Residues S124 and S131 each carry the phosphoserine modification. 2 positions are modified to phosphothreonine: T134 and T137. A Phosphoserine modification is found at S138.

The protein belongs to the globin family. In terms of assembly, heterotetramer of two alpha chains and two beta chains. As to expression, red blood cells.

In terms of biological role, involved in oxygen transport from the lung to the various peripheral tissues. The sequence is that of Hemoglobin subunit alpha-1/2 from Macroderma gigas (Australian ghost bat).